The chain runs to 556 residues: Formate--tetrahydrofolate ligase (556 aa).

65-72 (TPAGEGKT) serves as a coordination point for ATP.

Belongs to the formate--tetrahydrofolate ligase family.

The catalysed reaction is (6S)-5,6,7,8-tetrahydrofolate + formate + ATP = (6R)-10-formyltetrahydrofolate + ADP + phosphate. It functions in the pathway one-carbon metabolism; tetrahydrofolate interconversion. In Maricaulis maris (strain MCS10) (Caulobacter maris), this protein is Formate--tetrahydrofolate ligase.